A 265-amino-acid polypeptide reads, in one-letter code: U6 snRNA phosphodiesterase 1 (265 aa).

The tract at residues 1-72 (MSAAPLVGYS…DSTKHGGRVR (72 aa)) is disordered. Residues 20-31 (DGMRTRPGDGSH) are compositionally biased toward basic and acidic residues. H120 serves as the catalytic Proton acceptor. 120–122 (HLS) lines the AMP pocket. Residues Q164, Y202, and 206 to 210 (SFHLS) each bind UMP. AMP is bound by residues Y202 and 204–210 (DPSFHLS). The active-site Proton donor is H208.

The protein belongs to the 2H phosphoesterase superfamily. USB1 family. Interacts with PLRG1, CDC5L and PRPF19.

The protein localises to the nucleus. It catalyses the reaction a 3'-end uridylyl-uridine-RNA = a 3'-end 2',3'-cyclophospho-uridine-RNA + uridine. It carries out the reaction a 3'-end uridylyl-adenosine-RNA = a 3'-end 2',3'-cyclophospho-uridine-RNA + adenosine. Its activity is regulated as follows. 3'-5' RNA exonuclease activity is inhibited by a 3' phosphate terminated RNA. 3'-5' RNA exonuclease that trims the 3' end of oligo(U) and oligo(A) tracts of the pre-U6 small nuclear RNA (snRNA) molecule, leading to the formation of a mature U6 snRNA 3' end-terminated with a 2',3'-cyclic phosphate. Participates in the U6 snRNA 3' end processing that prevents U6 snRNA degradation. In addition also removes uridines from the 3' end of U6atac snRNA and possibly the vault RNA VTRNA1-1. The protein is U6 snRNA phosphodiesterase 1 of Homo sapiens (Human).